A 365-amino-acid chain; its full sequence is Mannose-1-phosphate guanylyltransferase catalytic subunit beta (365 aa).

The interval 2 to 221 (KALILVGGYG…PGFWMDVGQP (220 aa)) is substrate-binding domain. Asp-109 contacts GDP-alpha-D-mannose. Asp-109 lines the Mg(2+) pocket. Lys-161 is a catalytic residue. Asp-217 is a GDP-alpha-D-mannose binding site. A Mg(2+)-binding site is contributed by Asp-217. A hexapeptide repeat domain region spans residues 244–365 (ETGSNIHPTA…VNVPSKDIIM (122 aa)).

Belongs to the transferase hexapeptide repeat family. In terms of assembly, component of the GMPPA-GMPPB mannose-1-phosphate guanylyltransferase complex composed of 4 GMPPA subunits and 8 tag-335/GMPPB subunits; the complex is organized into three layers, a central layer made up of 2 GMPPA dimers sandwiched between two layers each made up of 2 tag-335/GMPPB dimers. Catalytic activity of tag-335/GMPPB is reduced when part of the complex and binding of GDP-alpha-D-Mannose by GMPPA induces allosteric feedback inhibition of tag-335/GMPPB. It depends on Mg(2+) as a cofactor.

The catalysed reaction is alpha-D-mannose 1-phosphate + GTP + H(+) = GDP-alpha-D-mannose + diphosphate. It functions in the pathway nucleotide-sugar biosynthesis; GDP-alpha-D-mannose biosynthesis; GDP-alpha-D-mannose from alpha-D-mannose 1-phosphate (GTP route): step 1/1. Enzyme activity is reduced by incorporation into the GMPPA-GMPPB mannose-1-phosphate guanylyltransferase complex. Allosterically inhibited, when part of the GMPPA-GMPPB complex, by GDP-alpha-D-mannose binding to GMPPA. Functionally, catalytic subunit of the GMPPA-GMPPB mannose-1-phosphate guanylyltransferase complex. Catalyzes the formation of GDP-mannose, an essential precursor of glycan moieties of glycoproteins and glycolipids. Can catalyze the reverse reaction in vitro. Together with GMPPA regulates GDP-alpha-D-mannose levels. This is Mannose-1-phosphate guanylyltransferase catalytic subunit beta (tag-335) from Caenorhabditis elegans.